A 134-amino-acid polypeptide reads, in one-letter code: Small ribosomal subunit protein uS8 (134 aa).

This sequence belongs to the universal ribosomal protein uS8 family. Part of the 30S ribosomal subunit. Contacts proteins S5 and S12.

One of the primary rRNA binding proteins, it binds directly to 16S rRNA central domain where it helps coordinate assembly of the platform of the 30S subunit. This Thermosipho africanus (strain TCF52B) protein is Small ribosomal subunit protein uS8.